We begin with the raw amino-acid sequence, 396 residues long: MKILYYDCFSGISGDMHLGALVDLGVELEYLQKELAKLPLEGEYELSATTVSKSGIRATQVKVKLREHHHHDHRTFGNIRAMILSSALSLRIKERALKMFQKIAEAESRIHAKPLEQVAFHEVGAIDSIIDIVGSAIGLEALGVEKIYASRIELGGGFVRCAHGLLPVPAPATLEILQGLPIGLHGVPFEATTPTGAAILACNVDSFSGSLPLSPQKIGYGAGEREGVDIPNILRLILADEPVQPSPKEVLLETNIDDMSPEHLAYAVERLFEAGALDVYMTPITTKKNRLATKLSILSLLDKERELTQILFQETSSIGLRRLEVEKIALARRFIQVPTPWGEVSVKLSMQGEKVVRYKAEYEECRRLAMTHSVPLHTLYLAIDKAVESCLNDTNH.

This sequence belongs to the LarC family.

In Wolinella succinogenes (strain ATCC 29543 / DSM 1740 / CCUG 13145 / JCM 31913 / LMG 7466 / NCTC 11488 / FDC 602W) (Vibrio succinogenes), this protein is Putative nickel insertion protein.